Reading from the N-terminus, the 389-residue chain is Cytochrome b (389 aa).

The next 4 helical transmembrane spans lie at 32–52 (FGSL…FLAM), 76–98 (YILR…VHIG), 113–133 (LWSI…LGYV), and 179–199 (FFSL…AHMI). The heme b site is built by His-82 and His-96. 2 residues coordinate heme b: His-183 and His-197. His-202 serves as a coordination point for a ubiquinone. The next 4 helical transmembrane spans lie at 225–245 (FIFK…IIVF), 289–309 (LLGV…PFVD), 322–342 (INMV…LVGA), and 349–369 (FIFL…VIVP).

It belongs to the cytochrome b family. In terms of assembly, fungal cytochrome b-c1 complex contains 10 subunits; 3 respiratory subunits, 2 core proteins and 5 low-molecular weight proteins. Cytochrome b-c1 complex is a homodimer. It depends on heme b as a cofactor.

It localises to the mitochondrion inner membrane. Its function is as follows. Component of the ubiquinol-cytochrome c reductase complex (complex III or cytochrome b-c1 complex) that is part of the mitochondrial respiratory chain. The b-c1 complex mediates electron transfer from ubiquinol to cytochrome c. Contributes to the generation of a proton gradient across the mitochondrial membrane that is then used for ATP synthesis. This chain is Cytochrome b (COB), found in Mycena viridimarginata.